Here is a 237-residue protein sequence, read N- to C-terminus: (5-formylfuran-3-yl)methyl phosphate synthase (237 aa).

Lysine 29 functions as the Schiff-base intermediate with substrate in the catalytic mechanism. Lysine 87 functions as the Proton acceptor in the catalytic mechanism.

It belongs to the MfnB family.

The catalysed reaction is 2 D-glyceraldehyde 3-phosphate = 4-(hydroxymethyl)-2-furancarboxaldehyde phosphate + phosphate + 2 H2O. It participates in cofactor biosynthesis; methanofuran biosynthesis. In terms of biological role, catalyzes the formation of 4-(hydroxymethyl)-2-furancarboxaldehyde phosphate (4-HFC-P) from two molecules of glyceraldehyde-3-P (GA-3-P). This Methanopyrus kandleri (strain AV19 / DSM 6324 / JCM 9639 / NBRC 100938) protein is (5-formylfuran-3-yl)methyl phosphate synthase.